A 1294-amino-acid chain; its full sequence is von Willebrand factor A domain-containing protein 3B (1294 aa).

In terms of domain architecture, VWFA spans 508 to 684 (CIYILIDTSH…EDLTLLVKEM (177 aa)). Disordered regions lie at residues 732 to 754 (CAKPQSDVDSTQTSSLNMLKGPW), 778 to 803 (RSQMSSLRSSACSERKDGLSNASSRR), 1012 to 1036 (APGEQQKLQGNPTKKTKSKRPDPLK), and 1193 to 1247 (DTQD…PRTA). Polar residues predominate over residues 738–748 (DVDSTQTSSLN). Residues 778–787 (RSQMSSLRSS) show a composition bias toward low complexity. Residues 1193–1202 (DTQDSREPRR) are compositionally biased toward basic and acidic residues. Basic residues predominate over residues 1203–1212 (EKPRRKKRPA). Positions 1213-1236 (KQPLQQAAPSDSDGSSHGISSHGS) are enriched in low complexity.

It localises to the cytoplasm. This is von Willebrand factor A domain-containing protein 3B (VWA3B) from Homo sapiens (Human).